The sequence spans 625 residues: MATQKQEKSVIWDWLTTVDHKKIAIMYLIAGTLFFVKAGVMALFMRIQLMYPEMNFLSGQTFNEFITMHGTIMLFLAATPLLFAFMNYVIPLQIGARDVAFPFVNALGFWIFFFGGLLLSLSWFFGGGPDAGWTAYVPLSSRDYGGLGIDFYVLGLQVSGIGTLISAINFLVTIVNMRAPGMTMMRLPLFVWTSFISSTLILFAFTPLAAGLALLMLDRLFEAQYFIPSMGGNVVLWQHIFWIFGHPEVYILVLPAFGIISEVIPAFSRKRLFGYTAMVFATMIIAFLGFMVWAHHMFTVGMGPVANSIFAVATMTIAVPTGIKIFNWLFTMWGGKITFNTAMLFASSFVPTFVLGGVTGVMLAMAPVDYLYHDTYFVVAHFHYIIVGGIVLSLFAGLFYWYPKMFGHMLNETLGKLFFWVFYIGFHLTFFVQHLLGLMGMPRRVYTYLGDQGLDAFNFISTIGTFFMSAGVILLVINVIYSAFKGERVTVADPWDARTLEWATPTPVPEYNFAQTPQVRSLDPLFYEKIHGDGTMKPAEPVTDIHMPNGSILPFIMSIGLFFAGFGLIMLNMDNPIINPWIVAIGGLALTFGCMFVRSIKEDHGYHIPAEQVKADLAELKKGGN.

Residues 23-43 (IAIMYLIAGTLFFVKAGVMAL) traverse the membrane as a helical segment. Histidine 69 provides a ligand contact to Fe(II)-heme a. The next 6 helical transmembrane spans lie at 72–92 (IMLF…VIPL), 99–119 (VAFP…GLLL), 151–171 (FYVL…INFL), 195–215 (FISS…LALL), 240–260 (IFWI…FGII), and 272–292 (LFGY…GFMV). Positions 246 and 250 each coordinate Cu cation. A cross-link (1'-histidyl-3'-tyrosine (His-Tyr)) is located at residues 246–250 (HPEVY). Residues histidine 295 and histidine 296 each coordinate Cu cation. The next 2 helical transmembrane spans lie at 309 to 329 (IFAV…FNWL) and 343 to 363 (MLFA…GVML). Position 381 (histidine 381) interacts with heme a3. 5 helical membrane-spanning segments follow: residues 382–402 (FHYI…FYWY), 417–437 (LFFW…HLLG), 460–480 (ISTI…INVI), 551–571 (SILP…LIML), and 577–597 (IINP…CMFV). Residue histidine 383 participates in Fe(II)-heme a binding.

This sequence belongs to the heme-copper respiratory oxidase family.

Its subcellular location is the cell membrane. The enzyme catalyses 4 Fe(II)-[cytochrome c] + O2 + 8 H(+)(in) = 4 Fe(III)-[cytochrome c] + 2 H2O + 4 H(+)(out). It functions in the pathway energy metabolism; oxidative phosphorylation. In terms of biological role, cytochrome c oxidase is the component of the respiratory chain that catalyzes the reduction of oxygen to water. Subunits 1-3 form the functional core of the enzyme complex. CO I is the catalytic subunit of the enzyme. Electrons originating in cytochrome c are transferred via the copper A center of subunit 2 and heme A of subunit 1 to the bimetallic center formed by heme A3 and copper B. The sequence is that of Cytochrome c oxidase subunit 1 (ctaD) from Alkalihalophilus pseudofirmus (strain ATCC BAA-2126 / JCM 17055 / OF4) (Bacillus pseudofirmus).